Here is a 308-residue protein sequence, read N- to C-terminus: Cap-specific mRNA (nucleoside-2'-O-)-methyltransferase (308 aa).

An mRNA-binding site is contributed by Y30. Positions 46, 74, 76, 80, 103, 105, 124, and 147 each coordinate S-adenosyl-L-methionine. The binding to NPH-I stretch occupies residues 177 to 257 (PIASSLKWRC…NTKIRPKIVL (81 aa)). K183 acts as the For methyltransferase activity in catalysis. MRNA-binding positions include 185–188 (RCPF), D190, 213–215 (SAE), and E241.

This sequence belongs to the class I-like SAM-binding methyltransferase superfamily. Poxvirus/kinetoplastid 2'-O-MTase family. As to quaternary structure, interacts with poly(A) polymerase catalytic subunit OPG063. Interacts with OPG109 and OPG123; these interactions might help linking transcription to capping and polyadenylation.

It localises to the virion. The enzyme catalyses a 5'-end (N(7)-methyl 5'-triphosphoguanosine)-ribonucleoside in mRNA + S-adenosyl-L-methionine = a 5'-end (N(7)-methyl 5'-triphosphoguanosine)-(2'-O-methyl-ribonucleoside) in mRNA + S-adenosyl-L-homocysteine + H(+). Functionally, displays methyltransferase, positive regulation of the poly(A) polymerase and transcription elongation activities. Involved in the modification of both mRNA ends and in intermediate and late gene positive transcription elongation. At the mRNAs 5' end, methylates the ribose 2' OH group of the first transcribed nucleotide, thereby producing a 2'-O-methylpurine cap. At the 3' end, functions as a processivity factor which stimulates the activity of the viral poly(A) polymerase OPG063 that creates mRNA's poly(A) tail. In the presence of OPG102, OPG063 does not dissociate from the RNA allowing tail elongation to around 250 adenylates. The protein is Cap-specific mRNA (nucleoside-2'-O-)-methyltransferase (OPG102) of Fowlpox virus (strain NVSL) (FPV).